We begin with the raw amino-acid sequence, 713 residues long: Vacuolar amino acid transporter 4 (713 aa).

A disordered region spans residues 1–33 (MVTNNGDGEHLGIRRNGNLRHPSNNMKIPRRAQ). The Vacuolar portion of the chain corresponds to 1–242 (MVTNNGDGEH…IDKVPFLTRN (242 aa)). Polar residues predominate over residues 21–33 (HPSNNMKIPRRAQ). The residue at position 88 (serine 88) is a Phosphoserine. A disordered region spans residues 99–121 (RSSVSHGNEAIPRVNPTKNSSAS). A phosphoserine mark is found at serine 130 and serine 165. The interval 200-233 (KRQEHQLNDSASSDFTSHESDSINQSSPSSNQDI) is disordered. Over residues 221–231 (SINQSSPSSNQ) the composition is skewed to low complexity. A helical membrane pass occupies residues 243–263 (FLEFLYVFGHFAGESFEDDFI). At 264–301 (PDSSNMMIRGEDERSALLSRPDHMKVLPSAKGTTSTKK) the chain is on the cytoplasmic side. The helical transmembrane segment at 302–322 (VFLILLKSFIGTGVLFLPNAF) threads the bilayer. The Vacuolar portion of the chain corresponds to 323–326 (HNGG). Residues 327–347 (LFFSVSMLAFFGIYSYWCYYI) form a helical membrane-spanning segment. Over 348–373 (LVQAKSSCGVSSFGDIGLKLYGPWMR) the chain is Cytoplasmic. Residues 374-394 (IIILFSLVITQVGFSGAYMIF) traverse the membrane as a helical segment. Residues 395 to 410 (TAKNLQAFLDNVFHVG) are Vacuolar-facing. The chain crosses the membrane as a helical span at residues 411-431 (VLPLSYLMVFQTIIFIPLSFI). Topologically, residues 432 to 438 (RNISKLS) are cytoplasmic. The helical transmembrane segment at 439–459 (LPSLLANFFIMAGLVIVIIFT) threads the bilayer. Residues 460-483 (AKRLFFDLMGTPAMGVVYGLNADR) are Vacuolar-facing. The chain crosses the membrane as a helical span at residues 484–504 (WTLFIGTAIFAFEGIGLIIPV). The Cytoplasmic portion of the chain corresponds to 505–515 (QDSMRNPEKFP). A helical membrane pass occupies residues 516–536 (LVLALVILTATILFISIATLG). Residues 537–561 (YLAYGSNVQTVILLNLPQSNIFVNL) lie on the Vacuolar side of the membrane. Residues 562 to 582 (IQLFYSIAIMLSTPLQLFPAI) form a helical membrane-spanning segment. Residues 583–621 (KIIENKFFPKFTKIYVKHDDLTTRVELRPNSGKLNWKIK) are Cytoplasmic-facing. A helical transmembrane segment spans residues 622–642 (WLKNFIRSIIVIIVVSIAYFG). The Vacuolar segment spans residues 643 to 648 (SDNLDK). Residues 649–669 (FVSVIGSLACIPLVYIYPSML) traverse the membrane as a helical segment. The Cytoplasmic portion of the chain corresponds to 670 to 692 (HLRGNSLPETKGEFWRFKPMLDT). A helical membrane pass occupies residues 693–711 (ILIFFGIASMLYTSYQSIF). Residues 712–713 (GV) lie on the Vacuolar side of the membrane.

Belongs to the amino acid/polyamine transporter 2 family.

The protein localises to the vacuole membrane. Involved in amino acid efflux from the vacuole to the cytoplasm. Capable of transporting large neutral amino acids including tyrosine, glutamine, asparagine, isoleucine and leucine. The chain is Vacuolar amino acid transporter 4 (AVT4) from Saccharomyces cerevisiae (strain ATCC 204508 / S288c) (Baker's yeast).